A 244-amino-acid polypeptide reads, in one-letter code: Myrosinase MB1 (244 aa).

N-linked (GlcNAc...) asparagine glycosylation is present at N32. A substrate-binding site is contributed by Y51. Residue E125 is the Nucleophile of the active site. Substrate is bound by residues W173 and 180–181 (EF). N216 carries N-linked (GlcNAc...) asparagine glycosylation.

It belongs to the glycosyl hydrolase 1 family. As to quaternary structure, homodimer. In terms of tissue distribution, in vacuoles called myrosin grains of a certain class of cells, myrosin cells, distributed in the cotyledons and the axis of the embryo as well as in different organs of the growing plant.

It is found in the vacuole. The enzyme catalyses a thioglucoside + H2O = a sugar + a thiol.. Its function is as follows. Degradation of glucosinolates (glucose residue linked by a thioglucoside bound to an amino acid derivative) to glucose, sulfate and any of the products: thiocyanates, isothiocyanates, nitriles, epithionitriles or oxazolidine-2-thiones. The sequence is that of Myrosinase MB1 from Sinapis alba (White mustard).